Reading from the N-terminus, the 116-residue chain is Aspartate 1-decarboxylase (116 aa).

S25 (schiff-base intermediate with substrate; via pyruvic acid) is an active-site residue. S25 carries the post-translational modification Pyruvic acid (Ser). A substrate-binding site is contributed by T57. Residue Y58 is the Proton donor of the active site. 73-75 (GAA) provides a ligand contact to substrate.

Belongs to the PanD family. In terms of assembly, heterooctamer of four alpha and four beta subunits. Requires pyruvate as cofactor. Post-translationally, is synthesized initially as an inactive proenzyme, which is activated by self-cleavage at a specific serine bond to produce a beta-subunit with a hydroxyl group at its C-terminus and an alpha-subunit with a pyruvoyl group at its N-terminus.

The protein localises to the cytoplasm. It catalyses the reaction L-aspartate + H(+) = beta-alanine + CO2. It participates in cofactor biosynthesis; (R)-pantothenate biosynthesis; beta-alanine from L-aspartate: step 1/1. In terms of biological role, catalyzes the pyruvoyl-dependent decarboxylation of aspartate to produce beta-alanine. This Leptospira borgpetersenii serovar Hardjo-bovis (strain JB197) protein is Aspartate 1-decarboxylase.